We begin with the raw amino-acid sequence, 129 residues long: Large ribosomal subunit protein bL12 (129 aa).

Belongs to the bacterial ribosomal protein bL12 family. As to quaternary structure, homodimer. Part of the ribosomal stalk of the 50S ribosomal subunit. Forms a multimeric L10(L12)X complex, where L10 forms an elongated spine to which 2 to 4 L12 dimers bind in a sequential fashion. Binds GTP-bound translation factors.

Its function is as follows. Forms part of the ribosomal stalk which helps the ribosome interact with GTP-bound translation factors. Is thus essential for accurate translation. The polypeptide is Large ribosomal subunit protein bL12 (Micrococcus luteus (strain ATCC 4698 / DSM 20030 / JCM 1464 / CCM 169 / CCUG 5858 / IAM 1056 / NBRC 3333 / NCIMB 9278 / NCTC 2665 / VKM Ac-2230) (Micrococcus lysodeikticus)).